Reading from the N-terminus, the 283-residue chain is Orotidine 5'-phosphate decarboxylase (283 aa).

The active-site Proton donor is Lys-97.

Belongs to the OMP decarboxylase family. Type 2 subfamily.

It carries out the reaction orotidine 5'-phosphate + H(+) = UMP + CO2. The protein operates within pyrimidine metabolism; UMP biosynthesis via de novo pathway; UMP from orotate: step 2/2. The protein is Orotidine 5'-phosphate decarboxylase of Clostridium botulinum (strain Loch Maree / Type A3).